A 103-amino-acid chain; its full sequence is Cell division suppressor protein YneA (103 aa).

The LysM domain maps to 36 to 87; the sequence is VKIEVQSGDTLWGLADQVNDSKSIDKNAFIDWVTQHNDLASTEIQPGDILVI.

This sequence belongs to the YneA family.

It is found in the cytoplasm. Inhibits cell division during the SOS response. Affects a later stage of the cell division protein assembly, after the assembly of the Z ring, by probably suppressing recruitment of FtsL and/or DivIC to the division machinery. This chain is Cell division suppressor protein YneA, found in Bacillus pumilus (strain SAFR-032).